Consider the following 467-residue polypeptide: Chromosomal replication initiator protein DnaA (467 aa).

Positions M1–S85 are domain I, interacts with DnaA modulators. The domain II stretch occupies residues S85–H130. A disordered region spans residues N87–K129. Over residues R99 to E109 the composition is skewed to basic and acidic residues. The segment at N131–A347 is domain III, AAA+ region. ATP contacts are provided by G175, G177, K178, and T179. A domain IV, binds dsDNA region spans residues Q348–N467.

The protein belongs to the DnaA family. In terms of assembly, oligomerizes as a right-handed, spiral filament on DNA at oriC.

Its subcellular location is the cytoplasm. Plays an essential role in the initiation and regulation of chromosomal replication. ATP-DnaA binds to the origin of replication (oriC) to initiate formation of the DNA replication initiation complex once per cell cycle. Binds the DnaA box (a 9 base pair repeat at the origin) and separates the double-stranded (ds)DNA. Forms a right-handed helical filament on oriC DNA; dsDNA binds to the exterior of the filament while single-stranded (ss)DNA is stabiized in the filament's interior. The ATP-DnaA-oriC complex binds and stabilizes one strand of the AT-rich DNA unwinding element (DUE), permitting loading of DNA polymerase. After initiation quickly degrades to an ADP-DnaA complex that is not apt for DNA replication. Binds acidic phospholipids. This chain is Chromosomal replication initiator protein DnaA, found in Hydrogenovibrio crunogenus (strain DSM 25203 / XCL-2) (Thiomicrospira crunogena).